A 690-amino-acid polypeptide reads, in one-letter code: ATP-dependent DNA helicase Hel308 (690 aa).

Residues glutamine 26 and 45 to 52 (IPTASGKT) contribute to the ATP site. Residues 32 to 188 (AGYLESEDNY…WLDARVVEHD (157 aa)) form the Helicase ATP-binding domain. A DEAH box motif is present at residues 133-136 (DEFH). A Helicase C-terminal domain is found at 208 to 417 (EKNDVVLKVL…NRDALYRQII (210 aa)).

It belongs to the helicase family. Hel308 subfamily. Monomer. Binds replication protein A (RPA), in presence and absence of DNA.

The catalysed reaction is Couples ATP hydrolysis with the unwinding of duplex DNA by translocating in the 3'-5' direction.. It catalyses the reaction ATP + H2O = ADP + phosphate + H(+). In terms of biological role, DNA-dependent ATPase and 3'-5' DNA helicase that may be involved in repair of stalled replication forks. Helicase with 3'-to 5'- polarity; able to unwind over 100 bp of DNA at 50 degrees Celsius. Unwinds forked DNA, preferentially on lagging strand forks; has weaker activity on Holliday junctions. Displaces the invading strand in DNA D-loops. Unwinds short oligonucleotides from dsDNA with 3'- but not blunt ends or 5'-ssDNA tails in an ATP-dependent manner. ATPase activity is stimulated by ssDNA but not dsDNA, protein binds ssDNA, dsDNA with 5'- or 3'-overhangs but not blunt ended dsDNA and replication forks. Replication forks bind both this protein and RPA. RPA does not stimulate the helicase activity of this protein. The sequence is that of ATP-dependent DNA helicase Hel308 from Methanothermobacter thermautotrophicus (strain ATCC 29096 / DSM 1053 / JCM 10044 / NBRC 100330 / Delta H) (Methanobacterium thermoautotrophicum).